The chain runs to 682 residues: Glutamine--fructose-6-phosphate aminotransferase [isomerizing] 2 (682 aa).

Residue C2 is the For GATase activity of the active site. Positions 2–288 constitute a Glutamine amidotransferase type-2 domain; the sequence is CGIFAYMNYR…DDDIAAVADG (287 aa). At S244 the chain carries Phosphoserine. SIS domains follow at residues 360 to 499 and 531 to 672; these read HLKE…DRIS and LALE…VDFP. Residues 377 to 378, 422 to 424, T427, and H578 each bind substrate; these read TS and SQS.

It carries out the reaction D-fructose 6-phosphate + L-glutamine = D-glucosamine 6-phosphate + L-glutamate. The protein operates within nucleotide-sugar biosynthesis; UDP-N-acetyl-alpha-D-glucosamine biosynthesis; alpha-D-glucosamine 6-phosphate from D-fructose 6-phosphate: step 1/1. In terms of biological role, controls the flux of glucose into the hexosamine pathway. Most likely involved in regulating the availability of precursors for N- and O-linked glycosylation of proteins. The polypeptide is Glutamine--fructose-6-phosphate aminotransferase [isomerizing] 2 (Gfpt2) (Mus musculus (Mouse)).